Reading from the N-terminus, the 1059-residue chain is Zinc finger protein 865 (1059 aa).

Disordered regions lie at residues 1 to 24 (MEANPAGSGAGGGGSSGIGGEDGV), 58 to 142 (LPCA…DAAF), and 161 to 206 (NLKR…CDPT). Positions 8-21 (SGAGGGGSSGIGGE) are enriched in gly residues. Pro residues predominate over residues 61-78 (APGPPPQPPPQPPPPQYD). Positions 93–119 (SSSSSSSSSSSSSSSSSSSSSSSSSQA) are enriched in low complexity. Composition is skewed to pro residues over residues 124–137 (PPLPPAFGAPPPPL) and 183–198 (APGPLPAPSQTPPGPP). 2 C2H2-type zinc fingers span residues 224 to 246 (FPCGVCQKSFKQSSHLVQHMLVH) and 252 to 274 (YECGVCGRTYNHVSSLIRHRRCH). The disordered stretch occupies residues 275-342 (KDVPPAAGGP…PAGVGVPPPA (68 aa)). Positions 281 to 296 (AGGPPQPGPHLPPLGL) are enriched in pro residues. Composition is skewed to low complexity over residues 297 to 316 (PAPAASAATAAAPSTVSSGP) and 324 to 337 (APSADGSAAPAGVG). 4 C2H2-type zinc fingers span residues 350–372 (FACPLCWKVFKKPSHLHQHQIIH), 378–400 (FSCSVCSKSFNRRESLKRHVKTH), 407–429 (LPCGICGKAFRDASYLLKHQAAH), and 441–463 (YPCDLCGKSYSAPQSLLRHKAAH). The disordered stretch occupies residues 461-503 (AAHAPPAAAAEAPKDGAASAPQPPPTFPPGPYLLPPDPPTTDS). The segment covering 463–480 (HAPPAAAAEAPKDGAASA) has biased composition (low complexity). Over residues 481 to 499 (PQPPPTFPPGPYLLPPDPP) the composition is skewed to pro residues. 5 consecutive C2H2-type zinc fingers follow at residues 550-572 (FCCGICGRGFGRRETLKRHERIH), 578-600 (HQCPVCGKRFRESFHLSKHHVVH), 606-628 (YKCELCGKVFGYPQSLTRHRQVH), 669-691 (YACSDCGEHFPDLFHVMSHKEVH), and 697-719 (YGCDACGKTFGFIENLMWHKLVH). The interval 726–747 (LLPPAPGGLQPPDGSSGTDAAS) is disordered. 9 consecutive C2H2-type zinc fingers follow at residues 792–814 (FSCATCGQSFKHFLGLVTHKYVH), 820–842 (LGCGLCGQSFAGAYDLLLHRRSH), 848–870 (FRCPVCGKRFWEAALLMRHQRCH), 876–898 (YRCGVCGRGFLRSWYLRQHRVVH), 904–926 (FKCGVCAKRFAQSSSLAEHRRLH), 932–954 (QRCSACGKTFRYRSNLLEHQRLH), 960–982 (YRCEHCGKGFFYLSSVLRHQRAH), 989–1011 (LRCPACLKAFKDPGYFRKHLAAH), and 1017–1039 (FRCSSCGEGFANTYGLKKHRLAH). Lys-802 participates in a covalent cross-link: Glycyl lysine isopeptide (Lys-Gly) (interchain with G-Cter in SUMO2). A Glycyl lysine isopeptide (Lys-Gly) (interchain with G-Cter in SUMO2) cross-link involves residue Lys-1040.

This sequence belongs to the krueppel C2H2-type zinc-finger protein family.

The protein localises to the nucleus. In terms of biological role, may be involved in transcriptional regulation. This is Zinc finger protein 865 (ZNF865) from Homo sapiens (Human).